Consider the following 389-residue polypeptide: Aminomethyltransferase (389 aa).

The protein belongs to the GcvT family. In terms of assembly, the glycine cleavage system is composed of four proteins: P, T, L and H.

It carries out the reaction N(6)-[(R)-S(8)-aminomethyldihydrolipoyl]-L-lysyl-[protein] + (6S)-5,6,7,8-tetrahydrofolate = N(6)-[(R)-dihydrolipoyl]-L-lysyl-[protein] + (6R)-5,10-methylene-5,6,7,8-tetrahydrofolate + NH4(+). Its function is as follows. The glycine cleavage system catalyzes the degradation of glycine. This is Aminomethyltransferase from Corynebacterium jeikeium (strain K411).